We begin with the raw amino-acid sequence, 221 residues long: Casparian strip membrane protein 3 (221 aa).

The segment covering 1-12 (MDIEKAASRREE) has biased composition (basic and acidic residues). A disordered region spans residues 1 to 28 (MDIEKAASRREEEEPIVQRPKLDKGKGK). The Cytoplasmic segment spans residues 1–58 (MDIEKAASRREEEEPIVQRPKLDKGKGKAHVFAPPMNYNRIMDKHKQEKVSAAGWKRG). The chain crosses the membrane as a helical span at residues 59-79 (VAIFDFVLRLIAAITAMAAAA). The Extracellular portion of the chain corresponds to 80–109 (KMATTEETLPFFTQFLQFQAEYTDLPTMSS). A helical membrane pass occupies residues 110-130 (FVIVNSIVGGYLTLSLPFSIV). Topologically, residues 131–148 (CILRPLAVPPRLFLIICD) are cytoplasmic. A helical transmembrane segment spans residues 149 to 169 (TAMMGLTMMAASASAAIVYLA). The Extracellular portion of the chain corresponds to 170 to 194 (HNGNSSSNWLPVCQQFGDFCQGTSG). Asparagine 173 is a glycosylation site (N-linked (GlcNAc...) asparagine). A helical transmembrane segment spans residues 195 to 215 (AVVASFIAATLLMFLVILSAF). Residues 216–221 (ALKRST) lie on the Cytoplasmic side of the membrane.

Belongs to the Casparian strip membrane proteins (CASP) family. In terms of assembly, homodimer and heterodimers.

It localises to the cell membrane. Its function is as follows. Regulates membrane-cell wall junctions and localized cell wall deposition. Required for establishment of the Casparian strip membrane domain (CSD) and the subsequent formation of Casparian strips, a cell wall modification of the root endodermis that determines an apoplastic barrier between the intraorganismal apoplasm and the extraorganismal apoplasm and prevents lateral diffusion. This Arabidopsis lyrata subsp. lyrata (Lyre-leaved rock-cress) protein is Casparian strip membrane protein 3.